We begin with the raw amino-acid sequence, 439 residues long: Trigger factor (439 aa).

One can recognise a PPIase FKBP-type domain in the interval 163-248 (GDRVTIDYRG…LNKLEAPKLP (86 aa)).

The protein belongs to the FKBP-type PPIase family. Tig subfamily.

It localises to the cytoplasm. It carries out the reaction [protein]-peptidylproline (omega=180) = [protein]-peptidylproline (omega=0). In terms of biological role, involved in protein export. Acts as a chaperone by maintaining the newly synthesized protein in an open conformation. Functions as a peptidyl-prolyl cis-trans isomerase. The protein is Trigger factor of Nitrosomonas europaea (strain ATCC 19718 / CIP 103999 / KCTC 2705 / NBRC 14298).